A 427-amino-acid polypeptide reads, in one-letter code: Serine--tRNA ligase (427 aa).

231–233 (TAE) is an L-serine binding site. 262–264 (RSE) lines the ATP pocket. Glutamate 285 serves as a coordination point for L-serine. Residue 349 to 352 (EISS) coordinates ATP. Serine 385 serves as a coordination point for L-serine.

It belongs to the class-II aminoacyl-tRNA synthetase family. Type-1 seryl-tRNA synthetase subfamily. In terms of assembly, homodimer. The tRNA molecule binds across the dimer.

The protein resides in the cytoplasm. It catalyses the reaction tRNA(Ser) + L-serine + ATP = L-seryl-tRNA(Ser) + AMP + diphosphate + H(+). It carries out the reaction tRNA(Sec) + L-serine + ATP = L-seryl-tRNA(Sec) + AMP + diphosphate + H(+). Its pathway is aminoacyl-tRNA biosynthesis; selenocysteinyl-tRNA(Sec) biosynthesis; L-seryl-tRNA(Sec) from L-serine and tRNA(Sec): step 1/1. Catalyzes the attachment of serine to tRNA(Ser). Is also able to aminoacylate tRNA(Sec) with serine, to form the misacylated tRNA L-seryl-tRNA(Sec), which will be further converted into selenocysteinyl-tRNA(Sec). The sequence is that of Serine--tRNA ligase from Rhizobium johnstonii (strain DSM 114642 / LMG 32736 / 3841) (Rhizobium leguminosarum bv. viciae).